The chain runs to 216 residues: Phosphoribosylformylglycinamidine synthase subunit PurQ (216 aa).

Positions 2-216 (SIGVIVFPGS…GRRMLEALLG (215 aa)) constitute a Glutamine amidotransferase type-1 domain. Catalysis depends on Cys-86, which acts as the Nucleophile. Active-site residues include His-193 and Glu-195.

As to quaternary structure, part of the FGAM synthase complex composed of 1 PurL, 1 PurQ and 2 PurS subunits.

Its subcellular location is the cytoplasm. It catalyses the reaction N(2)-formyl-N(1)-(5-phospho-beta-D-ribosyl)glycinamide + L-glutamine + ATP + H2O = 2-formamido-N(1)-(5-O-phospho-beta-D-ribosyl)acetamidine + L-glutamate + ADP + phosphate + H(+). The catalysed reaction is L-glutamine + H2O = L-glutamate + NH4(+). It functions in the pathway purine metabolism; IMP biosynthesis via de novo pathway; 5-amino-1-(5-phospho-D-ribosyl)imidazole from N(2)-formyl-N(1)-(5-phospho-D-ribosyl)glycinamide: step 1/2. Functionally, part of the phosphoribosylformylglycinamidine synthase complex involved in the purines biosynthetic pathway. Catalyzes the ATP-dependent conversion of formylglycinamide ribonucleotide (FGAR) and glutamine to yield formylglycinamidine ribonucleotide (FGAM) and glutamate. The FGAM synthase complex is composed of three subunits. PurQ produces an ammonia molecule by converting glutamine to glutamate. PurL transfers the ammonia molecule to FGAR to form FGAM in an ATP-dependent manner. PurS interacts with PurQ and PurL and is thought to assist in the transfer of the ammonia molecule from PurQ to PurL. This chain is Phosphoribosylformylglycinamidine synthase subunit PurQ, found in Synechococcus sp. (strain CC9605).